Reading from the N-terminus, the 421-residue chain is Inner membrane transport protein YdiN (421 aa).

Topologically, residues 1–9 (MSQNKAFST) are cytoplasmic. The helical transmembrane segment at 10–30 (PFILAVLCIYFSYFLHGISVI) threads the bilayer. Over 31 to 49 (TLAQNMSSLAEKFSTDNAG) the chain is Periplasmic. A helical transmembrane segment spans residues 50–70 (IAYLISGIGLGRLISILFFGV). Over 71-78 (ISDKFGRR) the chain is Cytoplasmic. The chain crosses the membrane as a helical span at residues 79-99 (AVILMAVIMYLLFFFGIPACP). Residue asparagine 100 is a topological domain, periplasmic. The chain crosses the membrane as a helical span at residues 101 to 121 (LTLAYGLAVCVGIANSALDTG). Residues 122–136 (GYPALMECFPKASGS) lie on the Cytoplasmic side of the membrane. Residues 137-157 (AVILVKAMVSFGQMFYPMLVS) traverse the membrane as a helical segment. Topologically, residues 158 to 163 (YMLLNN) are periplasmic. The chain crosses the membrane as a helical span at residues 164-184 (IWYGYGLIIPGILFVLITLML). Residues 185–215 (LKSKFPSQLVDASVTNELPQMNSKPLVWLEG) are Cytoplasmic-facing. Residues 216-236 (VSSVLFGVAAFSTFYVIVVWM) traverse the membrane as a helical segment. Topologically, residues 237–251 (PKYAMAFAGMSEAEA) are periplasmic. A helical membrane pass occupies residues 252–272 (LKTISYYSMGSLVCVFIFAAL). The Cytoplasmic segment spans residues 273–279 (LKKMVRP). A helical membrane pass occupies residues 280-300 (IWANVFNSALATITAAIIYLY). The Periplasmic segment spans residues 301–308 (PSPLVCNA). Residues 309–329 (GAFVIGFSAAGGILQLGVSVM) traverse the membrane as a helical segment. Topologically, residues 330-342 (SEFFPKSKAKVTS) are cytoplasmic. Residues 343–363 (IYMMMGGLANFVIPLITGYLS) traverse the membrane as a helical segment. Residues 364–369 (NIGLQY) lie on the Periplasmic side of the membrane. The helical transmembrane segment at 370 to 390 (IIVLDFTFALLALITAIIVFI) threads the bilayer. The Cytoplasmic segment spans residues 391–421 (RYYRVFIIPENDVRFGERKFCTRLNTIKHRG).

Belongs to the major facilitator superfamily.

It is found in the cell inner membrane. This Escherichia coli (strain K12) protein is Inner membrane transport protein YdiN (ydiN).